The sequence spans 240 residues: Large ribosomal subunit protein uL3 (240 aa).

2 disordered regions span residues 139–164 and 215–240; these read VSHR…KMPG and DAPK…QEGV. Gln151 bears the N5-methylglutamine mark. Low complexity predominate over residues 225 to 240; it reads ADGGEQAAPAAEQEGV.

It belongs to the universal ribosomal protein uL3 family. In terms of assembly, part of the 50S ribosomal subunit. Forms a cluster with proteins L14 and L19. In terms of processing, methylated by PrmB.

One of the primary rRNA binding proteins, it binds directly near the 3'-end of the 23S rRNA, where it nucleates assembly of the 50S subunit. This chain is Large ribosomal subunit protein uL3, found in Rhodopseudomonas palustris (strain BisA53).